The sequence spans 535 residues: L-aspartate oxidase (535 aa).

Residues 16–19 (SGAA), lysine 38, 45–52 (ATFYAQGG), and aspartate 223 contribute to the FAD site. The Proton donor/acceptor role is filled by arginine 290. Residues glutamate 375 and 391–392 (SL) each bind FAD.

Belongs to the FAD-dependent oxidoreductase 2 family. NadB subfamily. The cofactor is FAD.

It is found in the cytoplasm. It catalyses the reaction L-aspartate + O2 = iminosuccinate + H2O2. It participates in cofactor biosynthesis; NAD(+) biosynthesis; iminoaspartate from L-aspartate (oxidase route): step 1/1. Catalyzes the oxidation of L-aspartate to iminoaspartate, the first step in the de novo biosynthesis of NAD(+). The chain is L-aspartate oxidase (nadB) from Vibrio cholerae serotype O1 (strain ATCC 39315 / El Tor Inaba N16961).